Consider the following 218-residue polypeptide: Small ribosomal subunit protein uS3c (218 aa).

The region spanning 43–118 (IKNYVQKNMK…KLNISITRIE (76 aa)) is the KH type-2 domain.

It belongs to the universal ribosomal protein uS3 family. Part of the 30S ribosomal subunit.

Its subcellular location is the plastid. It localises to the chloroplast. The protein is Small ribosomal subunit protein uS3c (rps3) of Populus trichocarpa (Western balsam poplar).